The chain runs to 28 residues: Conotoxin Cl9b (28 aa).

A 4-hydroxyproline mark is found at Pro-17 and Pro-28.

Post-translationally, contains 3 disulfide bonds. In terms of tissue distribution, expressed by the venom duct.

It localises to the secreted. This is Conotoxin Cl9b from Californiconus californicus (California cone).